The primary structure comprises 81 residues: Large ribosomal subunit protein bL31B (81 aa).

This sequence belongs to the bacterial ribosomal protein bL31 family. Type B subfamily. Part of the 50S ribosomal subunit.

The polypeptide is Large ribosomal subunit protein bL31B (Bdellovibrio bacteriovorus (strain ATCC 15356 / DSM 50701 / NCIMB 9529 / HD100)).